Consider the following 458-residue polypeptide: Cytoplasmic tRNA 2-thiolation protein 2 (458 aa).

It belongs to the CTU2/NCS2 family.

Its subcellular location is the cytoplasm. It participates in tRNA modification; 5-methoxycarbonylmethyl-2-thiouridine-tRNA biosynthesis. In terms of biological role, plays a central role in 2-thiolation of mcm(5)S(2)U at tRNA wobble positions of tRNA(Lys), tRNA(Glu) and tRNA(Gln). May act by forming a heterodimer with NCS6/CTU1 that ligates sulfur from thiocarboxylated URM1 onto the uridine of tRNAs at wobble position. This Arabidopsis thaliana (Mouse-ear cress) protein is Cytoplasmic tRNA 2-thiolation protein 2.